The primary structure comprises 315 residues: Diacylglycerol kinase (315 aa).

A DAGKc domain is found at 1–132; sequence MRKRARIIYN…VDIGKMNNRY (132 aa). Residues 10–14, Thr41, 67–73, and Thr94 each bind ATP; these read NPTSG and GDGTLNE. Residues Lys213, Asp216, and Tyr218 each contribute to the Mg(2+) site. Glu273 acts as the Proton acceptor in catalysis.

The protein belongs to the diacylglycerol/lipid kinase family. As to quaternary structure, homodimer. It depends on Mg(2+) as a cofactor.

It catalyses the reaction a 1,2-diacyl-sn-glycerol + ATP = a 1,2-diacyl-sn-glycero-3-phosphate + ADP + H(+). In terms of biological role, catalyzes the phosphorylation of diacylglycerol (DAG) into phosphatidic acid. Is a key enzyme involved in the production of lipoteichoic acid by reintroducing DAG formed from the breakdown of membrane phospholipids into the phosphatidylglycerol biosynthetic pathway. In Staphylococcus aureus (strain USA300 / TCH1516), this protein is Diacylglycerol kinase (dagK).